The chain runs to 161 residues: RNA pyrophosphohydrolase (161 aa).

The Nudix hydrolase domain maps to 12–154 (PYRPGVGMMI…KRKLYQAVVK (143 aa)). A Nudix box motif is present at residues 46-67 (GGIVPGETPSIAAMREMLEEIG).

It belongs to the Nudix hydrolase family. RppH subfamily. A divalent metal cation is required as a cofactor.

Accelerates the degradation of transcripts by removing pyrophosphate from the 5'-end of triphosphorylated RNA, leading to a more labile monophosphorylated state that can stimulate subsequent ribonuclease cleavage. The polypeptide is RNA pyrophosphohydrolase (Rickettsia rickettsii (strain Iowa)).